The following is a 53-amino-acid chain: Ferredoxin B (53 aa).

The interval 1 to 35 is N-terminal extension; it reads GIDPNYRSLPVVKEEQGVKIYGTYEPPTKLGIWGT. Lysine 29 is subject to N6-methyllysine. The region spanning 34–53 is the 4Fe-4S ferredoxin-type 1 domain; that stretch reads GTIVGVDFDLCIADGSCINA. Positions 44 and 50 each coordinate [3Fe-4S] cluster.

[3Fe-4S] cluster is required as a cofactor. Requires [4Fe-4S] cluster as cofactor.

In terms of biological role, ferredoxins are iron-sulfur proteins that transfer electrons in a wide variety of metabolic reactions. The polypeptide is Ferredoxin B (Sulfuracidifex metallicus (Sulfolobus metallicus)).